A 475-amino-acid chain; its full sequence is Chromosomal replication initiator protein DnaA (475 aa).

The domain I, interacts with DnaA modulators stretch occupies residues 1–73; the sequence is MSDIEQERWS…LACWQAELPD (73 aa). Residues 73–131 form a domain II region; that stretch reads DVHRIDLMVRSAMRCAAPAKEAPAADPRRPEHGDGRASTELKMVATAPASANHDALGGS. The tract at residues 132 to 354 is domain III, AAA+ region; the sequence is PLDPRLTFAS…GAINRLLAHS (223 aa). 4 residues coordinate ATP: G179, G181, K182, and T183. The interval 355 to 475 is domain IV, binds dsDNA; it reads KLNAQPVTLE…VELLKRQLQE (121 aa).

It belongs to the DnaA family. As to quaternary structure, oligomerizes as a right-handed, spiral filament on DNA at oriC.

The protein resides in the cytoplasm. In terms of biological role, plays an essential role in the initiation and regulation of chromosomal replication. ATP-DnaA binds to the origin of replication (oriC) to initiate formation of the DNA replication initiation complex once per cell cycle. Binds the DnaA box (a 9 base pair repeat at the origin) and separates the double-stranded (ds)DNA. Forms a right-handed helical filament on oriC DNA; dsDNA binds to the exterior of the filament while single-stranded (ss)DNA is stabiized in the filament's interior. The ATP-DnaA-oriC complex binds and stabilizes one strand of the AT-rich DNA unwinding element (DUE), permitting loading of DNA polymerase. After initiation quickly degrades to an ADP-DnaA complex that is not apt for DNA replication. Binds acidic phospholipids. In Nitrobacter hamburgensis (strain DSM 10229 / NCIMB 13809 / X14), this protein is Chromosomal replication initiator protein DnaA.